The sequence spans 136 residues: ATP synthase epsilon chain (136 aa).

The protein belongs to the ATPase epsilon chain family. F-type ATPases have 2 components, CF(1) - the catalytic core - and CF(0) - the membrane proton channel. CF(1) has five subunits: alpha(3), beta(3), gamma(1), delta(1), epsilon(1). CF(0) has three main subunits: a, b and c.

Its subcellular location is the cellular thylakoid membrane. Its function is as follows. Produces ATP from ADP in the presence of a proton gradient across the membrane. The chain is ATP synthase epsilon chain (atpC) from Prochloron didemni.